The following is a 421-amino-acid chain: Indole-3-pyruvate monooxygenase YUCCA8 (421 aa).

30-35 lines the FAD pocket; it reads GAGPSG. Residue 201 to 206 coordinates NADP(+); the sequence is GCGNSG.

The protein belongs to the FMO family. The cofactor is FAD. In terms of tissue distribution, expressed in organs undergoing active growth and cell division.

The protein localises to the endoplasmic reticulum. It catalyses the reaction indole-3-pyruvate + NADPH + O2 + H(+) = (indol-3-yl)acetate + CO2 + NADP(+) + H2O. In terms of biological role, involved in auxin biosynthesis. Converts the indole-3-pyruvic acid (IPA) produced by the TAA family to indole-3-acetic acid (IAA). Seems not able to use tryptamine (TAM) as substrate. Probably responsible for auxin biosynthesis in leaves and involved in the regulation of lateral leaf growth. Required for maintaining water homeostasis and an appropriate root to shoot ratio. Required for the inhibition of root growth by ethylene in etiolated seedlings. Functions downstream of the ethylene-response transcription factor EIL1. In Oryza sativa subsp. indica (Rice), this protein is Indole-3-pyruvate monooxygenase YUCCA8.